We begin with the raw amino-acid sequence, 397 residues long: N-acetyllactosaminide beta-1,3-N-acetylglucosaminyltransferase 2 (397 aa).

The Cytoplasmic portion of the chain corresponds to 1–7; sequence MSVGRRR. Residues 8–28 traverse the membrane as a helical; Signal-anchor for type II membrane protein segment; the sequence is IKLLGILMMANVFIYFIMEVS. Residues 29–397 lie on the Lumenal side of the membrane; that stretch reads KSSSQEKNGK…SQLQSAHLKC (369 aa). N-linked (GlcNAc...) asparagine glycosylation is found at Asn-79, Asn-89, Asn-127, Asn-173, and Asn-219.

This sequence belongs to the glycosyltransferase 31 family. In terms of assembly, interacts with B3GNT8; this interaction greatly increases B3GNT2 catalytic activity, independently of B3GNT8 enzymatic activity. The cofactor is Mn(2+). As to expression, ubiquitous.

It is found in the golgi apparatus membrane. It carries out the reaction a beta-D-galactosyl-(1-&gt;4)-N-acetyl-beta-D-glucosaminyl derivative + UDP-N-acetyl-alpha-D-glucosamine = an N-acetyl-beta-D-glucosaminyl-(1-&gt;3)-beta-D-galactosyl-(1-&gt;4)-N-acetyl-beta-D-glucosaminyl derivative + UDP + H(+). It functions in the pathway protein modification; protein glycosylation. Beta-1,3-N-acetylglucosaminyltransferase involved in the synthesis of poly-N-acetyllactosamine. Catalyzes the initiation and elongation of poly-N-acetyllactosamine chains. Shows a marked preference for Gal(beta1-4)Glc(NAc)-based acceptors. Probably constitutes the main polylactosamine synthase. The protein is N-acetyllactosaminide beta-1,3-N-acetylglucosaminyltransferase 2 (B3GNT2) of Homo sapiens (Human).